Reading from the N-terminus, the 111-residue chain is Large ribosomal subunit protein uL24 (111 aa).

The protein belongs to the universal ribosomal protein uL24 family. Part of the 50S ribosomal subunit.

In terms of biological role, one of two assembly initiator proteins, it binds directly to the 5'-end of the 23S rRNA, where it nucleates assembly of the 50S subunit. One of the proteins that surrounds the polypeptide exit tunnel on the outside of the subunit. The polypeptide is Large ribosomal subunit protein uL24 (Cytophaga hutchinsonii (strain ATCC 33406 / DSM 1761 / CIP 103989 / NBRC 15051 / NCIMB 9469 / D465)).